Consider the following 357-residue polypeptide: MEQKQRRFTKNIFVLDANGKTLCGRIAKLSSQPYCQIKIGRVIAFKPVKNPEPKGYVLNVPGPGAYRIQDGQDIISLMLTPHGVEATTERWEEWKFEGVSVTPMATRVQHNGVMVDAEIKYCKGMGIVQPYMRNDFDRNEMPDLPGVMRSNYDVRELRQKIQNERESAPRLQVQSVSPREESRWMDDDEAKVDEEAKEMIPGPSRLKKLREARSNVFKEVEAEINWNLDEKDEEDRDEREDEEQVKTLSDDDEQGEDASDDEHPKTHITKEYIEKVAKQIKLKDERFMSLSSAMPPASGGFDRMIVTKKLKWQNVPLYCFDESSKRYELQCVGACERVAFVSKDMSLIILRSAFRRL.

Disordered stretches follow at residues 162-199 and 228-268; these read QNERESAPRLQVQSVSPREESRWMDDDEAKVDEEAKEM and LDEK…KTHI. Composition is skewed to acidic residues over residues 230–243 and 250–260; these read EKDEEDRDEREDEE and DDDEQGEDASD.

It belongs to the orbivirus non-structural protein NS2 family.

In terms of biological role, single-stranded RNA-binding protein. The chain is Non-structural protein NS2 (Segment-8) from Antilocapra americana (Pronghorn).